Here is a 121-residue protein sequence, read N- to C-terminus: Small ribosomal subunit protein uS13 (121 aa).

The interval 92 to 121 is disordered; sequence RRGLPVRGQNSKNNARTRKGPKRTVANKKK. Basic residues predominate over residues 106–121; sequence ARTRKGPKRTVANKKK.

It belongs to the universal ribosomal protein uS13 family. Part of the 30S ribosomal subunit. Forms a loose heterodimer with protein S19. Forms two bridges to the 50S subunit in the 70S ribosome.

Its function is as follows. Located at the top of the head of the 30S subunit, it contacts several helices of the 16S rRNA. In the 70S ribosome it contacts the 23S rRNA (bridge B1a) and protein L5 of the 50S subunit (bridge B1b), connecting the 2 subunits; these bridges are implicated in subunit movement. Contacts the tRNAs in the A and P-sites. This chain is Small ribosomal subunit protein uS13, found in Shouchella clausii (strain KSM-K16) (Alkalihalobacillus clausii).